The sequence spans 406 residues: NAD(P)H-quinone oxidoreductase subunit H, organellar chromatophore (406 aa).

Belongs to the complex I 49 kDa subunit family. NDH is composed of at least 16 different subunits, 5 of which are encoded in the nucleus.

It is found in the plastid. Its subcellular location is the organellar chromatophore thylakoid membrane. The catalysed reaction is a quinone + NADH + H(+) = a quinol + NAD(+). NDH shuttles electrons from NAD(P)H:plastoquinone, via FMN and iron-sulfur (Fe-S) centers, to quinones in the photosynthetic chain and possibly in a chloroplast respiratory chain. The immediate electron acceptor for the enzyme in this species is believed to be plastoquinone. Couples the redox reaction to proton translocation, and thus conserves the redox energy in a proton gradient. This Paulinella chromatophora protein is NAD(P)H-quinone oxidoreductase subunit H, organellar chromatophore.